Consider the following 271-residue polypeptide: Small ribosomal subunit protein uS3 (271 aa).

A KH type-2 domain is found at Ile-40–Arg-108. The interval Pro-210–Asn-271 is disordered. Over residues Val-215–Asp-247 the composition is skewed to basic and acidic residues.

Belongs to the universal ribosomal protein uS3 family. As to quaternary structure, part of the 30S ribosomal subunit. Forms a tight complex with proteins S10 and S14.

In terms of biological role, binds the lower part of the 30S subunit head. Binds mRNA in the 70S ribosome, positioning it for translation. The polypeptide is Small ribosomal subunit protein uS3 (Clostridioides difficile (strain 630) (Peptoclostridium difficile)).